The chain runs to 45 residues: Large ribosomal subunit protein bL34 (45 aa).

This sequence belongs to the bacterial ribosomal protein bL34 family.

The chain is Large ribosomal subunit protein bL34 from Corynebacterium urealyticum (strain ATCC 43042 / DSM 7109).